Consider the following 60-residue polypeptide: MAKKGNRIQVILECTEHKATGLAGTSRHITTKNRKNTPERIELKKYNSVLKKYTIHKEIK.

It belongs to the bacterial ribosomal protein bL33 family.

This is Large ribosomal subunit protein bL33 from Cytophaga hutchinsonii (strain ATCC 33406 / DSM 1761 / CIP 103989 / NBRC 15051 / NCIMB 9469 / D465).